A 122-amino-acid chain; its full sequence is EVKLVESGGGLVQPGGSLRLSCATSGFTFSDFYMEWVRQSPGKRLEWIAASRNKANDYTTEYSASVKGRFIVSRDTSQSILYLQMNALRAEDTAIYYCARYYGSSYWYFDVWGAGTTVTVSS.

The Ig-like domain occupies 1–114 (EVKLVESGGG…SYWYFDVWGA (114 aa)).

The sequence is that of Ig heavy chain V region M511 from Mus musculus (Mouse).